Consider the following 416-residue polypeptide: Enterobactin exporter EntS (416 aa).

Residues 1–21 (MNKQSWLLNLSLLKTHPAFRA) lie on the Cytoplasmic side of the membrane. Residues 22 to 42 (VFLARFISIVSLGLLGVAVPV) traverse the membrane as a helical segment. Residues 43 to 55 (QIQMMTHSTWQVG) lie on the Periplasmic side of the membrane. A helical membrane pass occupies residues 56-76 (LSVTLTGGAMFVGLMVGGVLA). Residues 77–83 (DRYERKK) are Cytoplasmic-facing. The helical transmembrane segment at 84–104 (VILLARGTCGIGFIGLCLNAL) threads the bilayer. Topologically, residues 105-109 (LPEPS) are periplasmic. The chain crosses the membrane as a helical span at residues 110-130 (LLAIYLLGLWDGFFASLGVTA). Residues 131-156 (LLAATPALVGRENLMQAGAITMLTVR) lie on the Cytoplasmic side of the membrane. A helical transmembrane segment spans residues 157–177 (LGSVISPMIGGLLLATGGVAW). Residue asparagine 178 is a topological domain, periplasmic. The helical transmembrane segment at 179–199 (YGLAAAGTFITLLPLLSLPAL) threads the bilayer. At 200–218 (PPPPQPREHPLKSLLAGFR) the chain is on the cytoplasmic side. The chain crosses the membrane as a helical span at residues 219 to 239 (FLLASPLVGGIALLGGLLTMA). Residues 240–256 (SAVRVLYPALADNWQMS) are Periplasmic-facing. Residues 257–277 (AAQIGFLYAAIPLGAAIGALT) form a helical membrane-spanning segment. Over 278–287 (SGKLAHSARP) the chain is Cytoplasmic. Residues 288–307 (GLLMLLSTLGSFLAIGLFGL) form a helical membrane-spanning segment. Over 308–313 (MPMWIL) the chain is Periplasmic. A helical membrane pass occupies residues 314 to 336 (GVICLALFGWLSAVSSLLQYTML). Over 337 to 356 (QTQTPEAMLGRINGLWTAQN) the chain is Cytoplasmic. Residues 357–377 (VTGDAIGAALLGGLGAMMTPV) traverse the membrane as a helical segment. Alanine 378 is a topological domain (periplasmic). The chain crosses the membrane as a helical span at residues 379-399 (SASASGFGLLIIGVLLLLVLV). The Cytoplasmic portion of the chain corresponds to 400 to 416 (ELRRFRQTPPQVTASDS).

Belongs to the major facilitator superfamily. EntS (TC 2.A.1.38) family.

It localises to the cell inner membrane. Its function is as follows. Component of an export pathway for enterobactin. The polypeptide is Enterobactin exporter EntS (Escherichia coli O81 (strain ED1a)).